An 85-amino-acid chain; its full sequence is Phosphocarrier protein HPr (85 aa).

The 85-residue stretch at 1 to 85 folds into the HPr domain; sequence MFQKEIKINA…HLSKIMTELE (85 aa). His-15 acts as the Pros-phosphohistidine intermediate in catalysis.

Belongs to the HPr family.

The protein localises to the cytoplasm. Its function is as follows. General (non sugar-specific) component of the phosphoenolpyruvate-dependent sugar phosphotransferase system (sugar PTS). This major carbohydrate active-transport system catalyzes the phosphorylation of incoming sugar substrates concomitantly with their translocation across the cell membrane. The phosphoryl group from phosphoenolpyruvate (PEP) is transferred to the phosphoryl carrier protein HPr by enzyme I. Phospho-HPr then transfers it to the PTS EIIA domain. This is Phosphocarrier protein HPr (ptsH) from Buchnera aphidicola subsp. Schizaphis graminum (strain Sg).